Reading from the N-terminus, the 176-residue chain is Disulfide bond formation protein B (176 aa).

Over 1–14 (MLRFLNQCSQGRGA) the chain is Cytoplasmic. The chain crosses the membrane as a helical span at residues 15–31 (WLLMAFTALALELTALW). Topologically, residues 32–49 (FQHVMLLKPCVLCIYERC) are periplasmic. Cys41 and Cys44 form a disulfide bridge. The helical transmembrane segment at 50 to 65 (ALFGVLGAALIGAIAP) threads the bilayer. The Cytoplasmic portion of the chain corresponds to 66–71 (KTPLRY). A helical membrane pass occupies residues 72–89 (VAMVIWLYSAFRGVQLTY). Residues 90–144 (EHTMLQLYPSPFATCDFMARFPEWLPLDKWVPQVFVASGDCAERQWEFLGLEMPQ) are Periplasmic-facing. A disulfide bridge connects residues Cys104 and Cys130. The helical transmembrane segment at 145-163 (WLLGIFIAYLIVAVLVVIS) threads the bilayer. Residues 164–176 (QPFKAKKRDLFGR) lie on the Cytoplasmic side of the membrane.

Belongs to the DsbB family.

It is found in the cell inner membrane. Functionally, required for disulfide bond formation in some periplasmic proteins. Acts by oxidizing the DsbA protein. The chain is Disulfide bond formation protein B from Escherichia coli O1:K1 / APEC.